Reading from the N-terminus, the 513-residue chain is Putative ribose/galactose/methyl galactoside import ATP-binding protein (513 aa).

ABC transporter domains are found at residues 24–260 (LSAE…VGRE) and 270–510 (VPIG…VMEL). 56–63 (GENGAGKS) serves as a coordination point for ATP.

It belongs to the ABC transporter superfamily. Carbohydrate importer 2 (CUT2) (TC 3.A.1.2) family.

The protein localises to the cell inner membrane. It catalyses the reaction D-ribose(out) + ATP + H2O = D-ribose(in) + ADP + phosphate + H(+). It carries out the reaction D-galactose(out) + ATP + H2O = D-galactose(in) + ADP + phosphate + H(+). Functionally, part of an ABC transporter complex involved in carbohydrate import. Could be involved in ribose, galactose and/or methyl galactoside import. Responsible for energy coupling to the transport system. The chain is Putative ribose/galactose/methyl galactoside import ATP-binding protein from Rhizobium johnstonii (strain DSM 114642 / LMG 32736 / 3841) (Rhizobium leguminosarum bv. viciae).